The sequence spans 341 residues: Glycerol-3-phosphate dehydrogenase [NAD(P)+] (341 aa).

4 residues coordinate NADPH: S15, W16, R36, and K110. Sn-glycerol 3-phosphate contacts are provided by K110, G139, and S141. NADPH is bound at residue A143. The sn-glycerol 3-phosphate site is built by K194, D247, S257, R258, and N259. The active-site Proton acceptor is K194. An NADPH-binding site is contributed by R258. Residues V282 and E284 each coordinate NADPH.

This sequence belongs to the NAD-dependent glycerol-3-phosphate dehydrogenase family.

The protein resides in the cytoplasm. It carries out the reaction sn-glycerol 3-phosphate + NAD(+) = dihydroxyacetone phosphate + NADH + H(+). The enzyme catalyses sn-glycerol 3-phosphate + NADP(+) = dihydroxyacetone phosphate + NADPH + H(+). It functions in the pathway membrane lipid metabolism; glycerophospholipid metabolism. Functionally, catalyzes the reduction of the glycolytic intermediate dihydroxyacetone phosphate (DHAP) to sn-glycerol 3-phosphate (G3P), the key precursor for phospholipid synthesis. In Xanthomonas euvesicatoria pv. vesicatoria (strain 85-10) (Xanthomonas campestris pv. vesicatoria), this protein is Glycerol-3-phosphate dehydrogenase [NAD(P)+].